We begin with the raw amino-acid sequence, 553 residues long: MLTANFPWLSAIILLPLLASFLIPVIPDKEGKTVRWFALGVGLADFILMCYVFLQKYDLSNPNLQLVEKIDWVPQIGLSWAVSVDGISAPLVLLAGLVTTLSILAAWQVDRKPRLFYFLMLLLYAAQIGVFVAQDLLLFFLMWEIELIPVYLLVSIWGGQKRRYAATKFLLYTAAASIFILVAGLAMALYGGGAMTFDMAELGFKDYPLALELVLYAGLLIAFGVKLAIFPLHTWLPDAHGEASAPVSMILAGVLLKMGGYGLIRLNMGLLPDAHIYFAPILAILGVVNIIYGAFASFGQQNMKRRLAYSSVSHMGFVLLGIASFTDVGISGAMLQMLSHGLIAAVLFFLAGVTYDRTHTLALNEMGGIAQAMPKVFALFTAGAMASLALPGMSGFASEITVFIGVTSSDVYSQTFRVVTVFLASVGLILTPIYLLSMLRQVFYGDGSSCDITNILPNKSNEQAVCFGTSCVLPHESEYSDAKPREIFIAVSFLALIVAIGFYPQLATRIYDVKTVAVNSEVRQAYTEIAATRQNIYAETQPDVSAKVASIFQ.

14 helical membrane-spanning segments follow: residues 6–26 (FPWLSAIILLPLLASFLIPVI), 34–54 (VRWFALGVGLADFILMCYVFL), 87–107 (ISAPLVLLAGLVTTLSILAAW), 115–135 (LFYFLMLLLYAAQIGVFVAQD), 136–156 (LLLFFLMWEIELIPVYLLVSI), 169–189 (FLLYTAAASIFILVAGLAMAL), 210–230 (ALELVLYAGLLIAFGVKLAIF), 244–264 (SAPVSMILAGVLLKMGGYGLI), 276–296 (IYFAPILAILGVVNIIYGAFA), 312–332 (VSHMGFVLLGIASFTDVGISG), 333–353 (AMLQMLSHGLIAAVLFFLAGV), 376–396 (VFALFTAGAMASLALPGMSGF), 418–438 (VVTVFLASVGLILTPIYLLSM), and 487–507 (IFIAVSFLALIVAIGFYPQLA).

Belongs to the complex I subunit 4 family.

The protein resides in the cellular thylakoid membrane. The enzyme catalyses a plastoquinone + NADH + (n+1) H(+)(in) = a plastoquinol + NAD(+) + n H(+)(out). It catalyses the reaction a plastoquinone + NADPH + (n+1) H(+)(in) = a plastoquinol + NADP(+) + n H(+)(out). Functionally, NDH-1 shuttles electrons from NAD(P)H, via FMN and iron-sulfur (Fe-S) centers, to quinones in the respiratory chain. The immediate electron acceptor for the enzyme in this species is believed to be plastoquinone. Couples the redox reaction to proton translocation (for every two electrons transferred, four hydrogen ions are translocated across the cytoplasmic membrane), and thus conserves the redox energy in a proton gradient. This is NAD(P)H-quinone oxidoreductase chain 4 2 from Microcystis aeruginosa (strain NIES-843 / IAM M-2473).